The primary structure comprises 138 residues: ATP synthase epsilon chain (138 aa).

Residues 88 to 119 (DREEARSTLSAAQARLDQSEQSEDKQERYEAQ) are disordered. Over residues 109-119 (SEDKQERYEAQ) the composition is skewed to basic and acidic residues.

Belongs to the ATPase epsilon chain family. In terms of assembly, F-type ATPases have 2 components, CF(1) - the catalytic core - and CF(0) - the membrane proton channel. CF(1) has five subunits: alpha(3), beta(3), gamma(1), delta(1), epsilon(1). CF(0) has three main subunits: a, b and c.

The protein localises to the cellular thylakoid membrane. Functionally, produces ATP from ADP in the presence of a proton gradient across the membrane. The polypeptide is ATP synthase epsilon chain (Acaryochloris marina (strain MBIC 11017)).